The following is a 73-amino-acid chain: Dipeptidyl peptidase 3 (73 aa).

It belongs to the peptidase M49 family. Zn(2+) serves as cofactor.

It localises to the membrane. The catalysed reaction is Release of an N-terminal dipeptide from a peptide comprising four or more residues, with broad specificity. Also acts on dipeptidyl 2-naphthylamides.. In terms of biological role, degrades neuropeptide proctolin (RYLPT) by cleavage between Tyr and Leu residues. The polypeptide is Dipeptidyl peptidase 3 (Blaberus craniifer (Death's head cockroach)).